The chain runs to 325 residues: Tetraacyldisaccharide 4'-kinase (325 aa).

55-62 serves as a coordination point for ATP; the sequence is TAGGNGKT.

This sequence belongs to the LpxK family.

The catalysed reaction is a lipid A disaccharide + ATP = a lipid IVA + ADP + H(+). Its pathway is glycolipid biosynthesis; lipid IV(A) biosynthesis; lipid IV(A) from (3R)-3-hydroxytetradecanoyl-[acyl-carrier-protein] and UDP-N-acetyl-alpha-D-glucosamine: step 6/6. Transfers the gamma-phosphate of ATP to the 4'-position of a tetraacyldisaccharide 1-phosphate intermediate (termed DS-1-P) to form tetraacyldisaccharide 1,4'-bis-phosphate (lipid IVA). The sequence is that of Tetraacyldisaccharide 4'-kinase from Cronobacter sakazakii (strain ATCC BAA-894) (Enterobacter sakazakii).